A 234-amino-acid chain; its full sequence is Octanoyltransferase (234 aa).

The region spanning 50-234 (GEAPELVWLL…AFEQVFGPTR (185 aa)) is the BPL/LPL catalytic domain. Substrate-binding positions include 88–95 (RGGQITYH), 163–165 (AIG), and 176–178 (GIA). The active-site Acyl-thioester intermediate is Cys-194.

Belongs to the LipB family.

The protein resides in the cytoplasm. It carries out the reaction octanoyl-[ACP] + L-lysyl-[protein] = N(6)-octanoyl-L-lysyl-[protein] + holo-[ACP] + H(+). It participates in protein modification; protein lipoylation via endogenous pathway; protein N(6)-(lipoyl)lysine from octanoyl-[acyl-carrier-protein]: step 1/2. Functionally, catalyzes the transfer of endogenously produced octanoic acid from octanoyl-acyl-carrier-protein onto the lipoyl domains of lipoate-dependent enzymes. Lipoyl-ACP can also act as a substrate although octanoyl-ACP is likely to be the physiological substrate. This is Octanoyltransferase from Rhodopseudomonas palustris (strain BisA53).